Reading from the N-terminus, the 226-residue chain is Beta-casein (226 aa).

Residues 1-15 (MKVLILACLVALALA) form the signal peptide. Phosphothreonine; in form 5-P is present on T18. Position 21 is a phosphoserine; in form 4-P and form 5-P (S21). Position 23 is a phosphoserine; in form 3-P, form 4-P and form 5-P (S23). A phosphoserine; in form 1-P, form 2-P, form 3-P, form 4-P and form 5-P mark is found at S24 and S25.

It belongs to the beta-casein family. In terms of processing, form 1-P is phosphorylated once; half of the molecules are phosphorylated on Ser-24, half on Ser-25. Mammary gland specific. Secreted in milk.

The protein localises to the secreted. Functionally, important role in determination of the surface properties of the casein micelles. The chain is Beta-casein (CSN2) from Homo sapiens (Human).